A 218-amino-acid polypeptide reads, in one-letter code: Protein GrpE (218 aa).

The tract at residues 1–75 is disordered; that stretch reads MTTPNGMPDN…DVDPDLDGDG (75 aa). Basic and acidic residues predominate over residues 23–40; sequence SADRAEQAAEEAAARQAE. Positions 48 to 75 are enriched in acidic residues; it reads SEEEISPELEAEINDLLSDVDPDLDGDG.

The protein belongs to the GrpE family. In terms of assembly, homodimer.

The protein localises to the cytoplasm. Functionally, participates actively in the response to hyperosmotic and heat shock by preventing the aggregation of stress-denatured proteins, in association with DnaK and GrpE. It is the nucleotide exchange factor for DnaK and may function as a thermosensor. Unfolded proteins bind initially to DnaJ; upon interaction with the DnaJ-bound protein, DnaK hydrolyzes its bound ATP, resulting in the formation of a stable complex. GrpE releases ADP from DnaK; ATP binding to DnaK triggers the release of the substrate protein, thus completing the reaction cycle. Several rounds of ATP-dependent interactions between DnaJ, DnaK and GrpE are required for fully efficient folding. The protein is Protein GrpE of Corynebacterium glutamicum (strain ATCC 13032 / DSM 20300 / JCM 1318 / BCRC 11384 / CCUG 27702 / LMG 3730 / NBRC 12168 / NCIMB 10025 / NRRL B-2784 / 534).